A 116-amino-acid polypeptide reads, in one-letter code: Ribonuclease P protein component (116 aa).

It belongs to the RnpA family. Consists of a catalytic RNA component (M1 or rnpB) and a protein subunit.

The catalysed reaction is Endonucleolytic cleavage of RNA, removing 5'-extranucleotides from tRNA precursor.. Its function is as follows. RNaseP catalyzes the removal of the 5'-leader sequence from pre-tRNA to produce the mature 5'-terminus. It can also cleave other RNA substrates such as 4.5S RNA. The protein component plays an auxiliary but essential role in vivo by binding to the 5'-leader sequence and broadening the substrate specificity of the ribozyme. In Carboxydothermus hydrogenoformans (strain ATCC BAA-161 / DSM 6008 / Z-2901), this protein is Ribonuclease P protein component.